A 341-amino-acid polypeptide reads, in one-letter code: Glucokinase (341 aa).

7 to 12 (GDIGGT) is an ATP binding site.

Belongs to the bacterial glucokinase family.

The protein resides in the cytoplasm. The enzyme catalyses D-glucose + ATP = D-glucose 6-phosphate + ADP + H(+). The polypeptide is Glucokinase (Nostoc punctiforme (strain ATCC 29133 / PCC 73102)).